The chain runs to 965 residues: Glycine dehydrogenase (decarboxylating) (965 aa).

Lys711 carries the N6-(pyridoxal phosphate)lysine modification.

The protein belongs to the GcvP family. The glycine cleavage system is composed of four proteins: P, T, L and H. Requires pyridoxal 5'-phosphate as cofactor.

It carries out the reaction N(6)-[(R)-lipoyl]-L-lysyl-[glycine-cleavage complex H protein] + glycine + H(+) = N(6)-[(R)-S(8)-aminomethyldihydrolipoyl]-L-lysyl-[glycine-cleavage complex H protein] + CO2. In terms of biological role, the glycine cleavage system catalyzes the degradation of glycine. The P protein binds the alpha-amino group of glycine through its pyridoxal phosphate cofactor; CO(2) is released and the remaining methylamine moiety is then transferred to the lipoamide cofactor of the H protein. The polypeptide is Glycine dehydrogenase (decarboxylating) (Psychrobacter arcticus (strain DSM 17307 / VKM B-2377 / 273-4)).